A 171-amino-acid polypeptide reads, in one-letter code: Co-chaperone protein HscB homolog (171 aa).

One can recognise a J domain in the interval 2–74; that stretch reads NHFELFGLPL…ISRAEYLLVQ (73 aa).

It belongs to the HscB family. Interacts with HscA and stimulates its ATPase activity.

Functionally, co-chaperone involved in the maturation of iron-sulfur cluster-containing proteins. Seems to help targeting proteins to be folded toward HscA. This chain is Co-chaperone protein HscB homolog, found in Vibrio atlanticus (strain LGP32) (Vibrio splendidus (strain Mel32)).